The primary structure comprises 1434 residues: Probable ATP-dependent RNA helicase spindle-E (1434 aa).

A disordered region spans residues 66–86; that stretch reads VGGPSNTKRTKTLDELESDDD. The Helicase ATP-binding domain occupies 127–294; that stretch reads MKAIKENPVV…FASCKSMPPV (168 aa). Residue 140-147 participates in ATP binding; the sequence is GETGCGKT. A DEAH box motif is present at residues 240 to 243; it reads DEVH. A Helicase C-terminal domain is found at 354–526; that stretch reads QSEQSYEEAK…SSVLKAKELD (173 aa). Positions 938–1001 constitute a Tudor domain; that stretch reads ASAITKGLQL…RLMRHELRRD (64 aa).

Belongs to the DEAD box helicase family. DEAH subfamily.

The protein resides in the cytoplasm. The enzyme catalyses ATP + H2O = ADP + phosphate + H(+). In terms of biological role, probable ATP-binding RNA helicase which plays a central role during spermatogenesis and oogenesis by repressing transposable elements and preventing their mobilization, which is essential for the germline integrity. Acts via the piRNA metabolic process, which mediates the repression of transposable elements during meiosis by forming complexes composed of piRNAs and Piwi and govern the methylation and subsequent repression of transposons. Involved in the repression of LTR retrotransposon copia. Also involved in telomere regulation by repressing specialized telomeric retroelements HeT-A, TAHRE, and TART; Drosophila telomeres being maintained by transposition of specialized telomeric retroelements. Involved in telomeric trans-silencing, a repression mechanism by which a transposon or a transgene inserted in subtelomeric heterochromatin has the capacity to repress in trans in the female germline, a homologous transposon, or transgene located in euchromatin. Involved in the repression of testis-expressed Stellate genes by the homologous Su(Ste) repeats. Required for anteroposterior and dorsoventral axis formation during oogenesis. The chain is Probable ATP-dependent RNA helicase spindle-E (spn-E) from Drosophila grimshawi (Hawaiian fruit fly).